Here is a 54-residue protein sequence, read N- to C-terminus: Ovomucoid (54 aa).

Residues 4-54 (VDCSEYPKPVCSPEYMPLCGSDSKTYNNKCDFCSAVVESNGTLTLGHFGKC) enclose the Kazal-like domain. Cystine bridges form between Cys-6-Cys-36, Cys-14-Cys-33, and Cys-22-Cys-54. Asn-43 carries N-linked (GlcNAc...) asparagine glycosylation.

The protein resides in the secreted. This is Ovomucoid from Casuarius casuarius (Southern cassowary).